Consider the following 311-residue polypeptide: Heparan sulfate glucosamine 3-O-sulfotransferase 1 (311 aa).

Residues 1 to 20 (MTLLLLGAVLLVAQPQLVHS) form the signal peptide. An N-linked (GlcNAc...) asparagine glycan is attached at Asn-52. 3'-phosphoadenylyl sulfate contacts are provided by residues 68–72 (KGGTR), Arg-151, and Ser-159. N-linked (GlcNAc...) asparagine glycans are attached at residues Asn-196, Asn-246, and Asn-253. Tyr-259 contacts 3'-phosphoadenylyl sulfate. Cys-260 and Cys-269 are joined by a disulfide. Residue 274 to 278 (KGRAH) coordinates 3'-phosphoadenylyl sulfate.

The protein belongs to the sulfotransferase 1 family.

The protein resides in the golgi apparatus lumen. The enzyme catalyses alpha-D-glucosaminyl-[heparan sulfate](n) + 3'-phosphoadenylyl sulfate = 3-sulfo-alpha-D-glucosaminyl-[heparan sulfate](n) + adenosine 3',5'-bisphosphate + H(+). In terms of biological role, sulfotransferase that utilizes 3'-phospho-5'-adenylyl sulfate (PAPS) to catalyze the transfer of a sulfo group to position 3 of glucosamine residues in heparan. Catalyzes the rate limiting step in the biosynthesis of heparan sulfate (HSact). This modification is a crucial step in the biosynthesis of anticoagulant heparan sulfate as it completes the structure of the antithrombin pentasaccharide binding site. The protein is Heparan sulfate glucosamine 3-O-sulfotransferase 1 (Hs3st1) of Mus musculus (Mouse).